The chain runs to 115 residues: Large ribosomal subunit protein bL19 (115 aa).

Belongs to the bacterial ribosomal protein bL19 family.

In terms of biological role, this protein is located at the 30S-50S ribosomal subunit interface and may play a role in the structure and function of the aminoacyl-tRNA binding site. The polypeptide is Large ribosomal subunit protein bL19 (Pectobacterium carotovorum subsp. carotovorum (strain PC1)).